The sequence spans 316 residues: 2,3-dihydroxyphenylpropionate/2,3-dihydroxicinnamic acid 1,2-dioxygenase (316 aa).

Residue histidine 115 is the Proton donor of the active site. Histidine 180 serves as the catalytic Proton acceptor.

It belongs to the LigB/MhpB extradiol dioxygenase family. In terms of assembly, homotetramer. It depends on Fe(2+) as a cofactor.

The catalysed reaction is 3-(2,3-dihydroxyphenyl)propanoate + O2 = (2Z,4E)-2-hydroxy-6-oxonona-2,4-dienedioate + H(+). It catalyses the reaction (2E)-3-(2,3-dihydroxyphenyl)prop-2-enoate + O2 = (2Z,4E,7E)-2-hydroxy-6-oxonona-2,4,7-trienedioate + H(+). It functions in the pathway aromatic compound metabolism; 3-phenylpropanoate degradation. In terms of biological role, catalyzes the non-heme iron(II)-dependent oxidative cleavage of 2,3-dihydroxyphenylpropionic acid and 2,3-dihydroxicinnamic acid into 2-hydroxy-6-ketononadienedioate and 2-hydroxy-6-ketononatrienedioate, respectively. This is 2,3-dihydroxyphenylpropionate/2,3-dihydroxicinnamic acid 1,2-dioxygenase from Rhodococcus rhodochrous.